The sequence spans 874 residues: UPF0182 protein Sfum_2137 (874 aa).

The next 7 helical transmembrane spans lie at 7 to 27, 57 to 77, 110 to 130, 171 to 191, 208 to 228, 252 to 272, and 283 to 303; these read WPLIILIGILGISAVVILSSL, IVFGAVTLLFFLIFFLNFWVA, SLWVYTPLSLILAVIIALPIF, RRLLIAFVLLLVGLVALYLLE, LHLSILILLIFLIETWDYVLQ, VIWALIWLTLFFLMGTAFSMI, and PLVVFAVGFVLVLGLRYSAFL.

The protein belongs to the UPF0182 family.

It is found in the cell membrane. The protein is UPF0182 protein Sfum_2137 of Syntrophobacter fumaroxidans (strain DSM 10017 / MPOB).